The following is a 120-amino-acid chain: Purkinje cell protein 2 (120 aa).

GoLoco domains follow at residues 7–29 (QEGF…RCSL) and 47–69 (MDNL…RVTV). Positions 16-120 (HVQGDRMEEQ…SSPQPQTQAP (105 aa)) are disordered. The segment covering 108 to 120 (RRNSSPQPQTQAP) has biased composition (polar residues). Phosphoserine is present on Ser-111.

Cerebellum (Purkinje cells) and retinal bipolar neurons.

In terms of biological role, may function as a cell-type specific modulator for G protein-mediated cell signaling. This is Purkinje cell protein 2 (Pcp2) from Mus musculus (Mouse).